A 90-amino-acid polypeptide reads, in one-letter code: Cell division topological specificity factor (90 aa).

Belongs to the MinE family.

Prevents the cell division inhibition by proteins MinC and MinD at internal division sites while permitting inhibition at polar sites. This ensures cell division at the proper site by restricting the formation of a division septum at the midpoint of the long axis of the cell. The chain is Cell division topological specificity factor from Clostridium perfringens (strain SM101 / Type A).